Reading from the N-terminus, the 400-residue chain is Snake venom metalloproteinase H1 (400 aa).

The signal sequence occupies residues 1 to 6 (FPYQGS). Residues 7–176 (SIILESGNVN…KKASQLIVST (170 aa)) constitute a propeptide that is removed on maturation. One can recognise a Peptidase M12B domain in the interval 180–377 (RYMEIVIVVD…ENPPCILNKP (198 aa)). Ca(2+) contacts are provided by Glu-183 and Asp-267. Cystine bridges form between Cys-291–Cys-372, Cys-331–Cys-356, and Cys-333–Cys-339. Residue His-316 participates in Zn(2+) binding. Residue Glu-317 is part of the active site. 2 residues coordinate Zn(2+): His-320 and His-326. The Ca(2+) site is built by Cys-372, Asn-375, Val-387, Asn-390, Leu-392, Glu-394, and Asp-400. Residues 378 to 400 (LRTDTVSTPVSGNELLEAGKDYD) constitute a propeptide that is removed on maturation.

Belongs to the venom metalloproteinase (M12B) family. P-I subfamily. In terms of assembly, monomer. It depends on Zn(2+) as a cofactor. Expressed by the venom gland.

It is found in the secreted. Functionally, snake venom metalloproteinase that impairs hemostasis in the envenomed animal. In Deinagkistrodon acutus (Hundred-pace snake), this protein is Snake venom metalloproteinase H1.